We begin with the raw amino-acid sequence, 66 residues long: Large ribosomal subunit protein bL33c (66 aa).

The protein belongs to the bacterial ribosomal protein bL33 family.

The protein resides in the plastid. Its subcellular location is the chloroplast. In Daucus carota (Wild carrot), this protein is Large ribosomal subunit protein bL33c.